The sequence spans 217 residues: Small ribosomal subunit protein uS3c (217 aa).

Residues 43 to 117 (IKNYVQKNKR…KLNIAITRIA (75 aa)) form the KH type-2 domain.

Belongs to the universal ribosomal protein uS3 family. In terms of assembly, part of the 30S ribosomal subunit.

The protein resides in the plastid. Its subcellular location is the chloroplast. This is Small ribosomal subunit protein uS3c (rps3) from Platanus occidentalis (Sycamore).